A 552-amino-acid polypeptide reads, in one-letter code: MRGAILATAAALAGTAMADVAHMRRHGHDSFHQRRAAVAEADATCGCTTEVVTVWGPPTLIPVATPTPSTVTSEAVTTLHSTSTSTVTIVASASTPATSSSPATPKVPLPTPAITNFPSTGVYTIPATTVTVFDTTTVCGATTTELPAGTHTYGGVTTVVETATTVVCPYATVEPSGTTVTSVIKTTTYVCPTPGTYTIAPTTTTVPTSTVVVYPTPAVITPGTYTQPEQTVTVTRTDYTYVCPFTGQNEPTSAPAAPSTTAVPATTTAAVPSTSSAAPSSSSTAPASTGAVGGQMGMTYTPYTKGGDCKDKSSVLSEVANLKSKGFTHVRVYSTDCNSLEYIGEAARTSGLQMIIGVFISSTGVSGAQDQVTAISKWAQWDLVSLIVVGNEAIQNGYCDASTLAGFISSAKSAFQSAGYTGKVTTTEPINVWQAYGSTLCGVCDIIGANIHPFFNADVSADQAGKFVAQEIKVLEGICPGKDVLNLETGWPHAGNANGKAVPGASEQAIAIKSIAQEVGSKSVFFSYFDDLWKEPGQFDVERYWGCIDTFN.

A signal peptide spans 1–18 (MRGAILATAAALAGTAMA). The disordered stretch occupies residues 250-291 (EPTSAPAAPSTTAVPATTTAAVPSTSSAAPSSSSTAPASTGA). Positions 251-289 (PTSAPAAPSTTAVPATTTAAVPSTSSAAPSSSSTAPAST) are enriched in low complexity. Catalysis depends on E392, which acts as the Proton donor. E488 (nucleophile) is an active-site residue.

It belongs to the glycosyl hydrolase 17 family.

It localises to the secreted. The protein resides in the cell wall. It carries out the reaction Hydrolysis of terminal, non-reducing beta-D-glucosyl residues with release of beta-D-glucose.. Its pathway is glycan metabolism; cellulose degradation. In terms of biological role, beta-glucosidases are one of a number of cellulolytic enzymes involved in the degradation of cellulosic biomass. Catalyzes the last step releasing glucose from the inhibitory cellobiose. The chain is Probable beta-glucosidase btgE (btgE) from Neosartorya fischeri (strain ATCC 1020 / DSM 3700 / CBS 544.65 / FGSC A1164 / JCM 1740 / NRRL 181 / WB 181) (Aspergillus fischerianus).